Here is a 146-residue protein sequence, read N- to C-terminus: Hemoglobin subunit beta (146 aa).

An N-acetylvaline modification is found at valine 1. Residues 2-146 form the Globin domain; sequence HLTAEEKSLV…VANALAHKYH (145 aa). Serine 44 is modified (phosphoserine). At lysine 59 the chain carries N6-acetyllysine. Histidine 63 is a heme b binding site. Lysine 82 is subject to N6-acetyllysine. Heme b is bound at residue histidine 92. Cysteine 93 carries the S-nitrosocysteine modification. An N6-acetyllysine modification is found at lysine 144.

It belongs to the globin family. In terms of assembly, heterotetramer of two alpha chains and two beta chains. In terms of tissue distribution, red blood cells.

In terms of biological role, involved in oxygen transport from the lung to the various peripheral tissues. The protein is Hemoglobin subunit beta (HBB) of Canis latrans (Coyote).